A 558-amino-acid polypeptide reads, in one-letter code: Trehalase 1 (558 aa).

This sequence belongs to the glycosyl hydrolase 15 family.

The enzyme catalyses alpha,alpha-trehalose + H2O = alpha-D-glucose + beta-D-glucose. Its pathway is glycan degradation; trehalose degradation; D-glucose from alpha,alpha-trehalose: step 1/1. Functionally, catalyzes the hydrolysis of alpha,alpha-trehalose into two molecules of D-glucose. In Sulfolobus acidocaldarius (strain ATCC 33909 / DSM 639 / JCM 8929 / NBRC 15157 / NCIMB 11770), this protein is Trehalase 1 (treH1).